The primary structure comprises 186 residues: Ribosome-recycling factor (186 aa).

It belongs to the RRF family.

It is found in the cytoplasm. In terms of biological role, responsible for the release of ribosomes from messenger RNA at the termination of protein biosynthesis. May increase the efficiency of translation by recycling ribosomes from one round of translation to another. The sequence is that of Ribosome-recycling factor from Chlorobaculum parvum (strain DSM 263 / NCIMB 8327) (Chlorobium vibrioforme subsp. thiosulfatophilum).